The chain runs to 426 residues: Tyrosine-protein phosphatase non-receptor type 20 (426 aa).

A compositionally biased stretch (basic residues) spans 1 to 10; sequence MSSPRKVRGK. A disordered region spans residues 1–58; sequence MSSPRKVRGKTGRDNDEEEGNSGNLNLRNSLPSSSQKMTPTKPIFGNKMNSENVKPSH. The span at 21-35 shows a compositional bias: low complexity; it reads NSGNLNLRNSLPSSS. Ser-76 is subject to Phosphoserine. Over residues 95-117 the composition is skewed to polar residues; it reads NSMDSETAGPSKTVSPVLSGSSR. The tract at residues 95–124 is disordered; sequence NSMDSETAGPSKTVSPVLSGSSRLSKDTET. Ser-127 bears the Phosphoserine mark. The 254-residue stretch at 165–418 folds into the Tyrosine-protein phosphatase domain; sequence IIREFLELEQ…QFCYEIVLEV (254 aa). Substrate is bound by residues Asp-329, 359 to 365, and Gln-403; that span reads CSAGVGR. The Phosphocysteine intermediate role is filled by Cys-359.

Belongs to the protein-tyrosine phosphatase family. Non-receptor class subfamily. Testis-specific. Specifically expressed in testicular germ cells that undergo meiosis (at protein level).

The protein localises to the nucleus. It localises to the cytoplasm. It is found in the cytoskeleton. The protein resides in the microtubule organizing center. Its subcellular location is the centrosome. It catalyses the reaction O-phospho-L-tyrosyl-[protein] + H2O = L-tyrosyl-[protein] + phosphate. Functionally, tyrosine-protein phosphatase targeted to sites of actin polymerization in response of varied extracellular stimuli. Has tyrosine phosphatase activity towards various tyrosyl phosphorylated substrates. The polypeptide is Tyrosine-protein phosphatase non-receptor type 20 (Ptpn20) (Mus musculus (Mouse)).